A 527-amino-acid chain; its full sequence is MKLLAVRRLLRIQRVVIRYQLDELLLELPLPFWLRALSWLLPWRWLPRRPLALSRGARLRLALEDLGPIFIKFGQLLSTRRDLLPPDIADELARLQDQVPPFPEDQAIALIERQLGAPVSQLFARFDSQPLASASVAQVHAAQLKSGEEVVVKVVRPGLKPVIRQDLAWLFLLARIAERASADARRLRPVEVVSDYEKTIFDELDLLREAANASQLRRNFEGSPLLYVPQVYWDLCRHQVLVMERIYGVPVTDLATLADQRTDMKLLAERGVEIFFTQVFRDSFFHADMHPGNIFVSTRTPWSPQYIAIDCGIIGSLTDEDQDYLARNLIAFFKRDYRKVAQLHIDSGWVPADTKVNEFEAAIRTVCEPIFEKPLKDISFGQLLLRLFQTARRFNMEVQPQLVLLQKTLLNIEGLGRQLYPDLDLWSTAQPFLERWMRERVSPLHLLRNLQQQAEQVPHLSQIARDALERLQRPEPPRESDARDQWPLRLLGAALIAAGAVQGLAPLLATWPAWLMVGGGLYLVLRR.

A helical membrane pass occupies residues 23–43; that stretch reads ELLLELPLPFWLRALSWLLPW. A Protein kinase domain is found at 125-488; it reads RFDSQPLASA…ESDARDQWPL (364 aa). ATP is bound by residues 131 to 139 and lysine 153; that span reads LASASVAQV. Aspartate 288 serves as the catalytic Proton acceptor. A helical transmembrane segment spans residues 504–524; the sequence is LAPLLATWPAWLMVGGGLYLV.

The protein belongs to the ABC1 family. UbiB subfamily.

It is found in the cell inner membrane. The protein operates within cofactor biosynthesis; ubiquinone biosynthesis [regulation]. Functionally, is probably a protein kinase regulator of UbiI activity which is involved in aerobic coenzyme Q (ubiquinone) biosynthesis. This Ectopseudomonas mendocina (strain ymp) (Pseudomonas mendocina) protein is Probable protein kinase UbiB.